Here is a 257-residue protein sequence, read N- to C-terminus: Triosephosphate isomerase (257 aa).

2 residues coordinate substrate: Asn12 and Lys14. His98 acts as the Electrophile in catalysis. Glu169 (proton acceptor) is an active-site residue.

It belongs to the triosephosphate isomerase family. Homodimer.

It catalyses the reaction D-glyceraldehyde 3-phosphate = dihydroxyacetone phosphate. The protein operates within carbohydrate biosynthesis; gluconeogenesis. It functions in the pathway carbohydrate degradation; glycolysis; D-glyceraldehyde 3-phosphate from glycerone phosphate: step 1/1. This chain is Triosephosphate isomerase (tpiA), found in Dictyostelium discoideum (Social amoeba).